The following is a 1095-amino-acid chain: Voltage-gated inwardly rectifying potassium channel KCNH3 (1095 aa).

Residues 1–228 lie on the Cytoplasmic side of the membrane; sequence MPAMRGLLAP…HCGALRATWD (228 aa). In terms of domain architecture, PAS spans 18–90; the sequence is IATRFDGTHS…QQIRKALDEH (73 aa). The PAC domain maps to 93-145; sequence FKAELILYRKSGLPFWCLLDVIPIKNEKGEVALFLVSHKDISETKNRGGPDNW. Basic and acidic residues predominate over residues 137 to 150; it reads KNRGGPDNWKERGG. Positions 137-161 are disordered; that stretch reads KNRGGPDNWKERGGGRRRYGRAGSK. A helical membrane pass occupies residues 229–249; that stretch reads GFILLATLYVAVTVPYSVCVS. The Extracellular portion of the chain corresponds to 250–259; it reads TAREPSAARG. Residues 260 to 280 traverse the membrane as a helical segment; that stretch reads PPSVCDLAVEVLFILDIVLNF. The Cytoplasmic segment spans residues 281-302; that stretch reads RTTFVSKSGQVVFAPKSICLHY. Residues 303 to 323 traverse the membrane as a helical segment; the sequence is VTTWFLLDVIAALPFDLLHAF. At 324–331 the chain is on the extracellular side; it reads KVNVYVGA. A helical; Voltage-sensor membrane pass occupies residues 332-352; the sequence is HLLKTVRLLRLLRLLPRLDRY. Residues 353–361 are Cytoplasmic-facing; sequence SQYSAVVLT. The helical transmembrane segment at 362-382 threads the bilayer; that stretch reads LLMAVFALLAHWVACVWFYIG. Over 383–464 the chain is Extracellular; sequence QQEIESSESE…GGPSLRSAYI (82 aa). A disordered region spans residues 417–447; it reads PDGGNSSGQSENCSSSSSSSGSGGGRGSEAN. The span at 419 to 436 shows a compositional bias: low complexity; that stretch reads GGNSSGQSENCSSSSSSS. 3 N-linked (GlcNAc...) asparagine glycosylation sites follow: N421, N428, and N447. Residues 465-485 constitute an intramembrane region (pore-forming); that stretch reads TSLYFALSSLTSVGFGNVSAN. The Selectivity filter motif lies at 476–481; it reads SVGFGN. The Extracellular portion of the chain corresponds to 486-490; it reads TDTEK. Residues 491–511 form a helical membrane-spanning segment; sequence IFSICTMLIGALMHAVVFGNV. Residues 512–1095 lie on the Cytoplasmic side of the membrane; sequence TAIIQRMYAR…QWTQEEGTGV (584 aa). Position 593–708 (593–708) interacts with a nucleoside 3',5'-cyclic phosphate; it reads LFEAASRGCL…FAPRFSRGLR (116 aa). Disordered stretches follow at residues 740–823, 854–883, and 965–1069; these read EEKE…LPPM, VGQS…PSEA, and GSVL…PWDP. Over residues 784 to 796 the composition is skewed to basic residues; sequence TAPRPRLGGRGRP. Low complexity predominate over residues 857-872; it reads SGPECSSSPSPGTESG. Over residues 974-991 the composition is skewed to pro residues; the sequence is HPRPGQPPPLMAPWPWGP.

This sequence belongs to the potassium channel family. H (Eag) (TC 1.A.1.20) subfamily. Kv12.2/KCNH3 sub-subfamily. The potassium channel is probably composed of a homo- or heterotetrameric complex of pore-forming alpha subunits that can associate with modulating beta subunits. Interacts with KCNE1 and KCNE3; these interactions regulate KCNH3 trafficking to the plasma membrane and its subsequent voltage-gated potassium channel activity. In terms of processing, N-glycosylated. N-glycosylation mediates traffick to the cell membrane but is not necessary for voltage-gated potassium channel activity. In terms of tissue distribution, detected in brain, but not in other tissues.

The protein localises to the cell membrane. The catalysed reaction is K(+)(in) = K(+)(out). Its function is as follows. Pore-forming (alpha) subunit of a voltage-gated inwardly rectifying potassium channel. Charactherized by a fast rate of activation during depolarization followed by a rapid inactivation at much more depolarized value causing inward rectification due to a C-type inactivation mechanism. Exhibits a rapid recovery from inactivation. In Mus musculus (Mouse), this protein is Voltage-gated inwardly rectifying potassium channel KCNH3.